The primary structure comprises 445 residues: Membrane protein insertase YidC (445 aa).

A run of 5 helical transmembrane segments spans residues 6–26, 248–268, 313–333, 352–372, and 388–408; these read VVAI…PIKV, FGWA…PLYH, ASGC…WSVI, LSAG…VASY, and GIIM…GLFL.

It belongs to the OXA1/ALB3/YidC family. Type 1 subfamily. As to quaternary structure, interacts with the Sec translocase complex via SecD. Specifically interacts with transmembrane segments of nascent integral membrane proteins during membrane integration.

It is found in the cell inner membrane. Its function is as follows. Required for the insertion and/or proper folding and/or complex formation of integral membrane proteins into the membrane. Involved in integration of membrane proteins that insert both dependently and independently of the Sec translocase complex, as well as at least some lipoproteins. Aids folding of multispanning membrane proteins. In Thermotoga maritima (strain ATCC 43589 / DSM 3109 / JCM 10099 / NBRC 100826 / MSB8), this protein is Membrane protein insertase YidC.